Here is a 740-residue protein sequence, read N- to C-terminus: Platelet endothelial cell adhesion molecule (740 aa).

The signal sequence occupies residues 1–27; sequence MRLRWTQGGNMWLGVLLTLQLCSSLEG. At 28–602 the chain is on the extracellular side; sequence QENSFTINSI…VRVYLAPWKK (575 aa). Ig-like C2-type domains follow at residues 35–126, 145–223, and 236–315; these read NSIH…YKVV, GGVV…DSVR, and PKFH…SKVS. N-linked (GlcNAc...) asparagine glycans are attached at residues N52 and N84. Cystine bridges form between C57/C109, C152/C206, and C256/C304. N-linked (GlcNAc...) asparagine glycans are attached at residues N284, N301, N320, N357, N372, N436, N456, and N552. Ig-like C2-type domains are found at residues 328–404, 425–494, and 500–592; these read PKLK…VQIA, GQTI…KVLR, and PVEE…NILA. Disulfide bonds link C347/C387, C432/C477, and C524/C573. The chain crosses the membrane as a helical span at residues 603–621; it reads GLIAVVVIAVIIAVLLLGA. The Cytoplasmic portion of the chain corresponds to 622–740; that stretch reads RFYFLKKSKA…SRTEGSLDGT (119 aa). Short sequence motifs (ITIM motif) lie at residues 690 to 695 and 713 to 718; these read VEYTEV and TVYSEI. Residues Y692 and Y715 each carry the phosphotyrosine; by FER modification. Residues 697–740 form a disordered region; it reads VTSPEPHRGLGTKGTETVYSEIRKADPDLVENRYSRTEGSLDGT. Positions 711–731 are membrane-bound segment which detaches upon phosphorylation; sequence TETVYSEIRKADPDLVENRYS. Residues 717–732 are compositionally biased toward basic and acidic residues; that stretch reads EIRKADPDLVENRYSR. The segment at 723–740 is may play a role in cytoprotective signaling; it reads PDLVENRYSRTEGSLDGT. Residues S731 and S736 each carry the phosphoserine modification.

As to quaternary structure, trans-homodimer (via Ig-like C2-type 1 and Ig-like C2-type 2 domains); trans-homodimerization is required for cell-cell interaction. Forms a complex with BDKRB2 and GNAQ. Interacts with BDKRB2 and GNAQ. Interacts with PTPN11; Tyr-715 is critical for PTPN11 recruitment. Interacts with FER. Interacts with CD177; the interaction is Ca(2+)-dependent; the interaction is direct. Post-translationally, phosphorylated on Ser and Tyr residues by src kinases after cellular activation. Upon activation, phosphorylated on Ser-731 which probably initiates the dissociation of the membrane-interaction segment (residues 711-731) from the cell membrane allowing the sequential phosphorylation of Tyr-715 and Tyr-692. Constitutively phosphorylated on Ser-736 in resting platelets. Phosphorylated on tyrosine residues by FER and FES in response to FCER1 activation. In endothelial cells Fyn mediates mechanical-force (stretch or pull) induced tyrosine phosphorylation. Palmitoylation by ZDHHC21 is necessary for cell surface expression in endothelial cells and enrichment in membrane rafts.

The protein resides in the cell membrane. It is found in the membrane raft. It localises to the cell junction. Cell adhesion molecule which is required for leukocyte transendothelial migration (TEM) under most inflammatory conditions. Tyr-692 plays a critical role in TEM and is required for efficient trafficking of PECAM1 to and from the lateral border recycling compartment (LBRC) and is also essential for the LBRC membrane to be targeted around migrating leukocytes. Trans-homophilic interaction may play a role in endothelial cell-cell adhesion via cell junctions. Heterophilic interaction with CD177 plays a role in transendothelial migration of neutrophils. Homophilic ligation of PECAM1 prevents macrophage-mediated phagocytosis of neighboring viable leukocytes by transmitting a detachment signal. Promotes macrophage-mediated phagocytosis of apoptotic leukocytes by tethering them to the phagocytic cells; PECAM1-mediated detachment signal appears to be disabled in apoptotic leukocytes. Modulates bradykinin receptor BDKRB2 activation. Regulates bradykinin- and hyperosmotic shock-induced ERK1/2 activation in endothelial cells. Induces susceptibility to atherosclerosis. This Sus scrofa (Pig) protein is Platelet endothelial cell adhesion molecule (PECAM1).